Here is a 291-residue protein sequence, read N- to C-terminus: Nucleotide-binding protein Cthe_0113 (291 aa).

ATP is bound at residue 8 to 15 (GISGAGKS). Residue 59–62 (DIRG) coordinates GTP.

This sequence belongs to the RapZ-like family.

In terms of biological role, displays ATPase and GTPase activities. The sequence is that of Nucleotide-binding protein Cthe_0113 from Acetivibrio thermocellus (strain ATCC 27405 / DSM 1237 / JCM 9322 / NBRC 103400 / NCIMB 10682 / NRRL B-4536 / VPI 7372) (Clostridium thermocellum).